A 425-amino-acid chain; its full sequence is Glutamate-1-semialdehyde 2,1-aminomutase (425 aa).

Lys-265 carries the N6-(pyridoxal phosphate)lysine modification.

The protein belongs to the class-III pyridoxal-phosphate-dependent aminotransferase family. HemL subfamily. In terms of assembly, homodimer. The cofactor is pyridoxal 5'-phosphate.

The protein localises to the cytoplasm. The enzyme catalyses (S)-4-amino-5-oxopentanoate = 5-aminolevulinate. The protein operates within porphyrin-containing compound metabolism; protoporphyrin-IX biosynthesis; 5-aminolevulinate from L-glutamyl-tRNA(Glu): step 2/2. The chain is Glutamate-1-semialdehyde 2,1-aminomutase from Psychromonas ingrahamii (strain DSM 17664 / CCUG 51855 / 37).